The following is a 142-amino-acid chain: Pro-vaccinia growth factor (142 aa).

Residues 1–18 (MSMKYLMLLFAAMIIRSF) form the signal peptide. The Extracellular portion of the chain corresponds to 19 to 100 (ADSGNAIETT…SENPNTTTSY (82 aa)). N-linked (GlcNAc...) asparagine; by host glycosylation is present at Asn34. Residues 41-81 (AIRLCGPEGDGYCLHGDCIHARDIDGMYCRCSHGYTGIRCQ) form the EGF-like domain. Intrachain disulfides connect Cys45/Cys58, Cys53/Cys69, and Cys71/Cys80. N-linked (GlcNAc...) asparagine; by host glycosylation is present at Asn95. Residues 101-121 (IPSPGIMLVLVGIIIIITCCL) traverse the membrane as a helical segment. Topologically, residues 122–142 (LSVYRFTRRTNKLPLQDMVVP) are cytoplasmic.

Belongs to the orthopoxvirus OPG019 family. In terms of assembly, vaccinia growth factor interacts with host EGFR and promotes EGFR dimerization.

The protein localises to the host membrane. It localises to the secreted. Stimulates cellular proliferation (hyperplasia)and mobility around infected cells to promote rapid and efficient spread of infection. This effect is beneficial for virus replication in vivo, because poxviruses replicate possibly better in proliferating cells than in quiescent cells. Acts by binding host EGFR, inducing its dimerization, autophosphorylation and leading to activation of several cellular pathways regulating cell proliferation or cell survival. The activation by host EGFR of mitogen activated protein kinases (MAPK) and extracellular-signal regulated kinases (ERK) are essential for the positive effect of vaccinia growth factor on poxvirus virulence in vivo. The chain is Pro-vaccinia growth factor (OPG019) from Vaccinia virus (strain Copenhagen) (VACV).